The following is a 268-amino-acid chain: Taurine import ATP-binding protein TauB (268 aa).

In terms of domain architecture, ABC transporter spans 4–236; the sequence is LAIRNISMRF…EGVDADLREV (233 aa). 41 to 48 contributes to the ATP binding site; that stretch reads GPSGCGKT.

This sequence belongs to the ABC transporter superfamily. Taurine importer (TC 3.A.1.17.1) family. As to quaternary structure, the complex is composed of two ATP-binding proteins (TauB), two transmembrane proteins (TauC) and a solute-binding protein (TauA).

The protein resides in the cell inner membrane. The catalysed reaction is taurine(out) + ATP + H2O = taurine(in) + ADP + phosphate + H(+). Its function is as follows. Part of the ABC transporter complex TauABC involved in taurine import. Responsible for energy coupling to the transport system. This chain is Taurine import ATP-binding protein TauB, found in Jannaschia sp. (strain CCS1).